The sequence spans 139 residues: Putative pre-16S rRNA nuclease (139 aa).

The protein belongs to the YqgF nuclease family.

Its subcellular location is the cytoplasm. In terms of biological role, could be a nuclease involved in processing of the 5'-end of pre-16S rRNA. This Streptococcus agalactiae serotype Ia (strain ATCC 27591 / A909 / CDC SS700) protein is Putative pre-16S rRNA nuclease.